A 701-amino-acid chain; its full sequence is UvrABC system protein B (701 aa).

One can recognise a Helicase ATP-binding domain in the interval 35-422; sequence RRIQGGAADT…GGDVVEQVIR (388 aa). Position 48–55 (48–55) interacts with ATP; it reads GATGTGKT. The Beta-hairpin signature appears at 101-124; that stretch reads YYDYYQPEAYVPQTDTYIEKDSSI. The region spanning 439-605 is the Helicase C-terminal domain; that stretch reads QIDDLVHEIR…PLRKKIADIL (167 aa). Residues 620-648 form a disordered region; that stretch reads ARSRGEKRGTPTPRSGALSGPDRVAEQAK. In terms of domain architecture, UVR spans 656 to 691; it reads AALVEQLTEQMHQAAADLQFELAARLRDEIKELKRE.

It belongs to the UvrB family. In terms of assembly, forms a heterotetramer with UvrA during the search for lesions. Interacts with UvrC in an incision complex.

The protein resides in the cytoplasm. The UvrABC repair system catalyzes the recognition and processing of DNA lesions. A damage recognition complex composed of 2 UvrA and 2 UvrB subunits scans DNA for abnormalities. Upon binding of the UvrA(2)B(2) complex to a putative damaged site, the DNA wraps around one UvrB monomer. DNA wrap is dependent on ATP binding by UvrB and probably causes local melting of the DNA helix, facilitating insertion of UvrB beta-hairpin between the DNA strands. Then UvrB probes one DNA strand for the presence of a lesion. If a lesion is found the UvrA subunits dissociate and the UvrB-DNA preincision complex is formed. This complex is subsequently bound by UvrC and the second UvrB is released. If no lesion is found, the DNA wraps around the other UvrB subunit that will check the other stand for damage. The sequence is that of UvrABC system protein B from Thermobifida fusca (strain YX).